Here is a 299-residue protein sequence, read N- to C-terminus: ATP phosphoribosyltransferase (299 aa).

The protein belongs to the ATP phosphoribosyltransferase family. Long subfamily. Equilibrium between an active dimeric form, an inactive hexameric form and higher aggregates. Interconversion between the various forms is largely reversible and is influenced by the natural substrates and inhibitors of the enzyme. Mg(2+) is required as a cofactor.

It is found in the cytoplasm. It catalyses the reaction 1-(5-phospho-beta-D-ribosyl)-ATP + diphosphate = 5-phospho-alpha-D-ribose 1-diphosphate + ATP. It functions in the pathway amino-acid biosynthesis; L-histidine biosynthesis; L-histidine from 5-phospho-alpha-D-ribose 1-diphosphate: step 1/9. Its activity is regulated as follows. Feedback inhibited by histidine. Catalyzes the condensation of ATP and 5-phosphoribose 1-diphosphate to form N'-(5'-phosphoribosyl)-ATP (PR-ATP). Has a crucial role in the pathway because the rate of histidine biosynthesis seems to be controlled primarily by regulation of HisG enzymatic activity. The sequence is that of ATP phosphoribosyltransferase from Yersinia pseudotuberculosis serotype O:1b (strain IP 31758).